Here is a 245-residue protein sequence, read N- to C-terminus: E3 ubiquitin-protein ligase RNF138 (245 aa).

Ala2 carries the post-translational modification N-acetylalanine. The segment at 18–58 adopts an RING-type zinc-finger fold; the sequence is CPVCQEVLKTPVRTTACQHVFCRKCFLTAMRESGAHCPLCR. The Zn(2+) site is built by Cys86, Cys89, His101, and Cys105. The C2HC RNF-type zinc finger occupies 86 to 105; sequence CRCCAKQIKFYRMRHHYKSC. A disordered region spans residues 125–154; the sequence is QDSVGNSNRSETSTSDNTETYQENTSSSGH. The residue at position 142 (Thr142) is a Phosphothreonine. 2 consecutive C2H2-type zinc fingers follow at residues 157–180 and 187–215; these read FKCP…NSNH and VTCP…NQRH. A UIM domain is found at 225-243; that stretch reads LQLDEETQYQTAVEESFQV.

As to quaternary structure, interacts with NLK. Interacts with XRCC5/Ku80. Interacts with RBBP8/CtIP. In terms of processing, auto-ubiquitinated.

The protein localises to the chromosome. The enzyme catalyses S-ubiquitinyl-[E2 ubiquitin-conjugating enzyme]-L-cysteine + [acceptor protein]-L-lysine = [E2 ubiquitin-conjugating enzyme]-L-cysteine + N(6)-ubiquitinyl-[acceptor protein]-L-lysine.. It functions in the pathway protein modification; protein ubiquitination. E3 ubiquitin-protein ligase involved in DNA damage response by promoting DNA resection and homologous recombination. Recruited to sites of double-strand breaks following DNA damage and specifically promotes double-strand break repair via homologous recombination. Two different, non-exclusive, mechanisms have been proposed. According to a report, regulates the choice of double-strand break repair by favoring homologous recombination over non-homologous end joining (NHEJ): acts by mediating ubiquitination of XRCC5/Ku80, leading to remove the Ku complex from DNA breaks, thereby promoting homologous recombination. According to another report, cooperates with UBE2Ds E2 ubiquitin ligases (UBE2D1, UBE2D2, UBE2D3 or UBE2D4) to promote homologous recombination by mediating ubiquitination of RBBP8/CtIP. Together with NLK, involved in the ubiquitination and degradation of TCF/LEF. Also exhibits auto-ubiquitination activity in combination with UBE2K. May act as a negative regulator in the Wnt/beta-catenin-mediated signaling pathway. In Homo sapiens (Human), this protein is E3 ubiquitin-protein ligase RNF138.